A 517-amino-acid chain; its full sequence is MARAWGLLLAIGVILPTWLSSTKVSSLIERISDPKDLKKLLRTRNNVLVLYSESEVAAESHLKLLSTVAQAVKGQGTICWVDCGDAESRKLCKKMKVDLSPKDKKIELFHYQDGAFHMQYDRAVTLKSIVAFLKDPKGPPLWEEDPGAKDVVHIDSEKDFRRLLKKEEKPLLMMFYAPWCSMCKRIMPHFQKAATQVRGHTVLAGMNVYPPEFENIKEEYNVRGYPTICYFEKGRFLFQYENYGSTAEDIVEWLKNPQPPQPQVPETPWADEGGSVYHLTDEDFDQFVKEHSSVLVMFHAPWCGHCKKMKPEFESAAEVLHGDAESSGVLAAVDATINEALAERFHISAFPTLKYFKNGEQQAVPALRTKKKFIEWMQNPEAPPPPEPTWEEQQTSVLHLVGDNFRETLKKKKHTLVMFYAPWCPHCKKVIPHFTATADAFKDDRKIACAAVDCVKDKNQDLCQQESVKAYPTFHYYHYGKLVEKYESDRTELGFTSFIRTLREGDLKRLEKRREDL.

The N-terminal stretch at 1 to 21 is a signal peptide; it reads MARAWGLLLAIGVILPTWLSS. Cystine bridges form between Cys-83-Cys-92, Cys-180-Cys-183, Cys-303-Cys-306, and Cys-424-Cys-427. Thioredoxin domains lie at 132-259, 268-382, and 376-504; these read FLKD…NPQP, PWAD…NPEA, and WMQN…TLRE. The Prevents secretion from ER signature appears at 514–517; sequence REDL.

This sequence belongs to the protein disulfide isomerase family.

The protein localises to the endoplasmic reticulum lumen. The catalysed reaction is Catalyzes the rearrangement of -S-S- bonds in proteins.. This chain is Protein disulfide-isomerase A5 (Pdia5), found in Rattus norvegicus (Rat).